A 24-amino-acid polypeptide reads, in one-letter code: Lactadherin (24 aa).

It is found in the membrane. The protein localises to the secreted. Its subcellular location is the cytoplasmic vesicle. The protein resides in the secretory vesicle. It localises to the acrosome membrane. In terms of biological role, specific ligand for the alpha-v/beta-3 and alpha-v/beta-5 receptors. Also binds to phosphatidylserine-enriched cell surfaces in a receptor-independent manner. Zona pellucida-binding protein which may play a role in gamete interaction. Contributes to phagocytic removal of apoptotic cells in many tissues. Plays an important role in the maintenance of intestinal epithelial homeostasis and the promotion of mucosal healing. Promotes VEGF-dependent neovascularization. The polypeptide is Lactadherin (Equus asinus (Donkey)).